A 604-amino-acid chain; its full sequence is UvrABC system protein C (604 aa).

The 78-residue stretch at 15 to 92 folds into the GIY-YIG domain; sequence DLPGCYLMKN…IQKHQPYFNI (78 aa). The UVR domain occupies 197–232; that stretch reads ETVKKQLTKRMDQAAADLEFERAAELRDQLNYIEMT.

The protein belongs to the UvrC family. In terms of assembly, interacts with UvrB in an incision complex.

The protein resides in the cytoplasm. The UvrABC repair system catalyzes the recognition and processing of DNA lesions. UvrC both incises the 5' and 3' sides of the lesion. The N-terminal half is responsible for the 3' incision and the C-terminal half is responsible for the 5' incision. This chain is UvrABC system protein C, found in Lactiplantibacillus plantarum (strain ATCC BAA-793 / NCIMB 8826 / WCFS1) (Lactobacillus plantarum).